A 169-amino-acid chain; its full sequence is Lutropin/choriogonadotropin subunit beta (169 aa).

An N-terminal signal peptide occupies residues M1–A20. 6 disulfide bridges follow: C29–C77, C43–C92, C46–C130, C54–C108, C58–C110, and C113–C120. N33 carries an N-linked (GlcNAc...) asparagine glycan. Residues A131 to S169 form a disordered region. S138 and S143 each carry an O-linked (GalNAc...) serine glycan. A compositionally biased stretch (low complexity) spans P145–R158. Residue T147 is glycosylated (O-linked (GalNAc...) threonine). O-linked (GalNAc...) serine glycosylation is present at S148. T149 carries an O-linked (GalNAc...) threonine glycan. The O-linked (GalNAc...) serine glycan is linked to S150. Residues T151 and T153 are each glycosylated (O-linked (GalNAc...) threonine). O-linked (GalNAc...) serine glycans are attached at residues S157, S160, S161, and S169.

The protein belongs to the glycoprotein hormones subunit beta family. As to quaternary structure, heterodimer of a common alpha chain and a unique beta chain which confers biological specificity to thyrotropin, lutropin, follitropin and gonadotropin. Post-translationally, microheterogeneity at Asn-33. O-glycosylation appears to be responsible for the beta subunit contribution to the difference in LH-receptor binding activity between LSH-B and CG-B.

The protein resides in the secreted. In terms of biological role, promotes spermatogenesis and ovulation by stimulating the testes and ovaries to synthesize steroids. The sequence is that of Lutropin/choriogonadotropin subunit beta (LHB) from Equus caballus (Horse).